The sequence spans 70 residues: Brevinin-1MT1 (70 aa).

The first 22 residues, Met1–Cys22, serve as a signal peptide directing secretion. Positions Glu23–Glu44 are excised as a propeptide. Cys64 and Cys70 are joined by a disulfide.

Belongs to the frog skin active peptide (FSAP) family. Brevinin subfamily. As to expression, expressed by the skin glands.

It localises to the secreted. Functionally, antimicrobial peptide with activity against a variety of Gram-negative and Gram-positive bacteria and against fungi. Shows strong hemolytic activity against human erythrocytes. The sequence is that of Brevinin-1MT1 from Amolops mantzorum (Sichuan torrent frog).